The sequence spans 504 residues: Deoxyguanosinetriphosphate triphosphohydrolase (504 aa).

In terms of domain architecture, HD spans 66 to 273 (RLTHSLEVQQ…MEAADDISYC (208 aa)).

This sequence belongs to the dGTPase family. Type 1 subfamily. In terms of assembly, homotetramer. It depends on Mg(2+) as a cofactor.

The catalysed reaction is dGTP + H2O = 2'-deoxyguanosine + triphosphate + H(+). Functionally, dGTPase preferentially hydrolyzes dGTP over the other canonical NTPs. This Klebsiella pneumoniae subsp. pneumoniae (strain ATCC 700721 / MGH 78578) protein is Deoxyguanosinetriphosphate triphosphohydrolase.